Consider the following 258-residue polypeptide: Development-specific 25 kDa protein (258 aa).

Val-10 to Leu-34 serves as a coordination point for NAD(+). Ser-138 is a substrate binding site. Tyr-151 serves as the catalytic Proton acceptor.

It belongs to the short-chain dehydrogenases/reductases (SDR) family.

This is Development-specific 25 kDa protein from Sarcophaga peregrina (Flesh fly).